The sequence spans 175 residues: Peptide deformylase (175 aa).

Residues cysteine 98 and histidine 140 each coordinate Fe cation. Residue glutamate 141 is part of the active site. A Fe cation-binding site is contributed by histidine 144.

Belongs to the polypeptide deformylase family. The cofactor is Fe(2+).

The enzyme catalyses N-terminal N-formyl-L-methionyl-[peptide] + H2O = N-terminal L-methionyl-[peptide] + formate. Removes the formyl group from the N-terminal Met of newly synthesized proteins. Requires at least a dipeptide for an efficient rate of reaction. N-terminal L-methionine is a prerequisite for activity but the enzyme has broad specificity at other positions. The protein is Peptide deformylase of Nitrobacter hamburgensis (strain DSM 10229 / NCIMB 13809 / X14).